A 735-amino-acid chain; its full sequence is Muskelin (735 aa).

A2 is modified (N-acetylalanine). A LisH domain is found at 172–204 (REQEAIRLCLKHFRQHNYTEAFESLQKKTKIAL). A CTLH domain is found at 206–258 (HPMLTDMHDKLVLKGDFDACEELIEKAVNDGLFNQYISQQEYKPRWSQIIPKS). 6 Kelch repeats span residues 284 to 330 (TVYL…SCHK), 339 to 391 (QIYT…FDHQ), 400 to 458 (MIYT…SRIG), 469 to 515 (CLYV…TGFT), 526 to 578 (EIHV…SLQE), and 597 to 651 (VHYL…AQMD). Positions 701–735 (DHTYAQRTQLFDTLVNFFPDSMTPPKGNLVDLITL) are important for location in the cytosol.

Homodimer; may form higher oligomers. Identified in the CTLH complex that contains GID4, RANBP9 and/or RANBP10, MKLN1, MAEA, RMND5A (or alternatively its paralog RMND5B), GID8, ARMC8, WDR26 and YPEL5. Within this complex, MAEA, RMND5A (or alternatively its paralog RMND5B), GID8, WDR26, and RANBP9 and/or RANBP10 form the catalytic core, while GID4, MKLN1, ARMC8 and YPEL5 have ancillary roles. Interacts with RANBP9. Part of a complex consisting of RANBP9, MKLN1 and GID8. Interacts with GABRA1. Interacts with the C-terminal tail of PTGER3. In terms of tissue distribution, detected in brain, especially in hippocampus and cerebellum (at protein level).

The protein resides in the cytoplasm. It is found in the cytosol. Its subcellular location is the nucleus. It localises to the nucleoplasm. The protein localises to the cell projection. The protein resides in the ruffle. It is found in the cell cortex. Its subcellular location is the synapse. It localises to the postsynapse. Its function is as follows. Component of the CTLH E3 ubiquitin-protein ligase complex that selectively accepts ubiquitin from UBE2H and mediates ubiquitination and subsequent proteasomal degradation of the transcription factor HBP1. Required for internalization of the GABA receptor GABRA1 from the cell membrane via endosomes and subsequent GABRA1 degradation. Acts as a mediator of cell spreading and cytoskeletal responses to the extracellular matrix component THBS1. In Mus musculus (Mouse), this protein is Muskelin (Mkln1).